The sequence spans 457 residues: Siroheme synthase (457 aa).

The precorrin-2 dehydrogenase /sirohydrochlorin ferrochelatase stretch occupies residues 1-204 (MEIFPISLKL…DNLDIANQMM (204 aa)). Residues 22-23 (HI) and 43-44 (PD) contribute to the NAD(+) site. Phosphoserine is present on Ser-129. A uroporphyrinogen-III C-methyltransferase region spans residues 216–457 (GEVYLVGAGP…VSLREQLQWL (242 aa)). Pro-225 provides a ligand contact to S-adenosyl-L-methionine. Asp-248 (proton acceptor) is an active-site residue. The Proton donor role is filled by Lys-270. S-adenosyl-L-methionine contacts are provided by residues 301-303 (GGD), Ile-306, 331-332 (TA), Met-383, and Gly-412.

This sequence in the N-terminal section; belongs to the precorrin-2 dehydrogenase / sirohydrochlorin ferrochelatase family. It in the C-terminal section; belongs to the precorrin methyltransferase family.

The enzyme catalyses uroporphyrinogen III + 2 S-adenosyl-L-methionine = precorrin-2 + 2 S-adenosyl-L-homocysteine + H(+). It carries out the reaction precorrin-2 + NAD(+) = sirohydrochlorin + NADH + 2 H(+). It catalyses the reaction siroheme + 2 H(+) = sirohydrochlorin + Fe(2+). The protein operates within cofactor biosynthesis; adenosylcobalamin biosynthesis; precorrin-2 from uroporphyrinogen III: step 1/1. It functions in the pathway cofactor biosynthesis; adenosylcobalamin biosynthesis; sirohydrochlorin from precorrin-2: step 1/1. It participates in porphyrin-containing compound metabolism; siroheme biosynthesis; precorrin-2 from uroporphyrinogen III: step 1/1. Its pathway is porphyrin-containing compound metabolism; siroheme biosynthesis; siroheme from sirohydrochlorin: step 1/1. The protein operates within porphyrin-containing compound metabolism; siroheme biosynthesis; sirohydrochlorin from precorrin-2: step 1/1. In terms of biological role, multifunctional enzyme that catalyzes the SAM-dependent methylations of uroporphyrinogen III at position C-2 and C-7 to form precorrin-2 via precorrin-1. Then it catalyzes the NAD-dependent ring dehydrogenation of precorrin-2 to yield sirohydrochlorin. Finally, it catalyzes the ferrochelation of sirohydrochlorin to yield siroheme. This is Siroheme synthase from Acinetobacter baylyi (strain ATCC 33305 / BD413 / ADP1).